Consider the following 358-residue polypeptide: ATP synthase gamma chain, chloroplastic (358 aa).

The transit peptide at 1–35 (MAAMLASKQGAFMGRSSFAPAPKGVASRGSLQVVA) directs the protein to the chloroplast. The active site involves Cys-123. A disulfide bridge links Cys-233 with Cys-239.

It belongs to the ATPase gamma chain family. As to quaternary structure, F-type ATPases have 2 components, F(1) - the catalytic core - and F(0) - the membrane proton channel. F(1) has five subunits: alpha(3), beta(3), gamma(1), delta(1), epsilon(1). F(0) has four main subunits: a(1), b(1), b'(1) and c(10-14). The alpha and beta chains form an alternating ring which encloses part of the gamma chain. F(1) is attached to F(0) by a central stalk formed by the gamma and epsilon chains, while a peripheral stalk is formed by the delta, b and b' chains.

Its subcellular location is the plastid. The protein resides in the chloroplast thylakoid membrane. Functionally, f(1)F(0) ATP synthase produces ATP from ADP in the presence of a proton or sodium gradient. F-type ATPases consist of two structural domains, F(1) containing the extramembraneous catalytic core and F(0) containing the membrane proton channel, linked together by a central stalk and a peripheral stalk. During catalysis, ATP synthesis in the catalytic domain of F(1) is coupled via a rotary mechanism of the central stalk subunits to proton translocation. In terms of biological role, produces ATP from ADP in the presence of a proton gradient across the membrane. The gamma chain is believed to be important in regulating ATPase activity and the flow of protons through the CF(0) complex. The sequence is that of ATP synthase gamma chain, chloroplastic from Chlamydomonas reinhardtii (Chlamydomonas smithii).